The chain runs to 511 residues: NADH-quinone oxidoreductase subunit N 1 (511 aa).

The next 14 membrane-spanning stretches (helical) occupy residues 15-35 (LALPMLVLSGFAVAILLLDLV), 46-66 (ALALAGLAAATMSLAKVWQAV), 89-109 (FAIYFYLLFIVGAAVAILMSI), 120-140 (GEYHALILFATIGMMCMASGM), 142-162 (LILLFVGLELMALSTYVLVGF), 177-197 (LLLGAFSSGIFAYGLSLFYGL), 221-241 (PIALLALITTATGLLFKIAAV), 264-284 (VAVKAAGWAMLLRIFLFMLWP), 289-309 (YTPILIFVAVATMIGGNFAAL), 317-337 (LLAYSSISHVGYMLLGLVASD), 347-367 (GILVYLAVYTFMNLGAFAVIT), 393-413 (AVLLLVFLLSLAGIPPLAGFW), 426-446 (GHYTLAVVAVLFAVLGMYYYL), and 471-491 (AALWISALGTLGIGLFPEVFL).

The protein belongs to the complex I subunit 2 family. NDH-1 is composed of 14 different subunits. Subunits NuoA, H, J, K, L, M, N constitute the membrane sector of the complex.

The protein resides in the cell inner membrane. It carries out the reaction a quinone + NADH + 5 H(+)(in) = a quinol + NAD(+) + 4 H(+)(out). Functionally, NDH-1 shuttles electrons from NADH, via FMN and iron-sulfur (Fe-S) centers, to quinones in the respiratory chain. The immediate electron acceptor for the enzyme in this species is believed to be ubiquinone. Couples the redox reaction to proton translocation (for every two electrons transferred, four hydrogen ions are translocated across the cytoplasmic membrane), and thus conserves the redox energy in a proton gradient. In Koribacter versatilis (strain Ellin345), this protein is NADH-quinone oxidoreductase subunit N 1.